The chain runs to 337 residues: Ferredoxin--NADP reductase (337 aa).

FAD contacts are provided by Asp33, Gln41, Tyr46, Ala86, Phe120, Asp286, and Thr327.

Belongs to the ferredoxin--NADP reductase type 2 family. As to quaternary structure, homodimer. FAD serves as cofactor.

The catalysed reaction is 2 reduced [2Fe-2S]-[ferredoxin] + NADP(+) + H(+) = 2 oxidized [2Fe-2S]-[ferredoxin] + NADPH. The sequence is that of Ferredoxin--NADP reductase from Rickettsia canadensis (strain McKiel).